Reading from the N-terminus, the 1199-residue chain is DNA-directed RNA polymerase subunit beta' (1199 aa).

Residues Cys-60, Cys-62, Cys-75, and Cys-78 each contribute to the Zn(2+) site. Mg(2+)-binding residues include Asp-449, Asp-451, and Asp-453. The Zn(2+) site is built by Cys-818, Cys-892, Cys-899, and Cys-902.

The protein belongs to the RNA polymerase beta' chain family. In terms of assembly, the RNAP catalytic core consists of 2 alpha, 1 beta, 1 beta' and 1 omega subunit. When a sigma factor is associated with the core the holoenzyme is formed, which can initiate transcription. It depends on Mg(2+) as a cofactor. Requires Zn(2+) as cofactor.

The catalysed reaction is RNA(n) + a ribonucleoside 5'-triphosphate = RNA(n+1) + diphosphate. Functionally, DNA-dependent RNA polymerase catalyzes the transcription of DNA into RNA using the four ribonucleoside triphosphates as substrates. The polypeptide is DNA-directed RNA polymerase subunit beta' (Bacillus licheniformis (strain ATCC 14580 / DSM 13 / JCM 2505 / CCUG 7422 / NBRC 12200 / NCIMB 9375 / NCTC 10341 / NRRL NRS-1264 / Gibson 46)).